Reading from the N-terminus, the 175-residue chain is Thioredoxin-like protein CITRX, chloroplastic (175 aa).

Residues 1–64 (MQAASLAFHP…KPPAVGKYVR (64 aa)) constitute a chloroplast transit peptide. The Thioredoxin domain occupies 74–175 (AKEIQELIKG…MMRDIIDNDL (102 aa)). Residues Cys98 and Cys101 each act as nucleophile in the active site. An intrachain disulfide couples Cys98 to Cys101.

Belongs to the thioredoxin family. Plant CITRX-type subfamily. In terms of assembly, interacts with Cf-9 resistance protein.

Its subcellular location is the plastid. The protein localises to the chloroplast. Probable thiol-disulfide oxidoreductase that may play a role in proper chloroplast development. The polypeptide is Thioredoxin-like protein CITRX, chloroplastic (Solanum lycopersicum (Tomato)).